Reading from the N-terminus, the 213-residue chain is Pyridoxine/pyridoxamine 5'-phosphate oxidase (213 aa).

FMN contacts are provided by residues 60-65 (RMVLMK), 75-76 (YS), lysine 82, and glutamine 104. Lysine 65 provides a ligand contact to substrate. The substrate site is built by tyrosine 122 and arginine 126. Residues 139–140 (QS) and tryptophan 184 contribute to the FMN site. A substrate-binding site is contributed by 190–192 (RLH). Arginine 194 is an FMN binding site.

It belongs to the pyridoxamine 5'-phosphate oxidase family. In terms of assembly, homodimer. Requires FMN as cofactor.

It catalyses the reaction pyridoxamine 5'-phosphate + O2 + H2O = pyridoxal 5'-phosphate + H2O2 + NH4(+). It carries out the reaction pyridoxine 5'-phosphate + O2 = pyridoxal 5'-phosphate + H2O2. Its pathway is cofactor metabolism; pyridoxal 5'-phosphate salvage; pyridoxal 5'-phosphate from pyridoxamine 5'-phosphate: step 1/1. It functions in the pathway cofactor metabolism; pyridoxal 5'-phosphate salvage; pyridoxal 5'-phosphate from pyridoxine 5'-phosphate: step 1/1. Catalyzes the oxidation of either pyridoxine 5'-phosphate (PNP) or pyridoxamine 5'-phosphate (PMP) into pyridoxal 5'-phosphate (PLP). This chain is Pyridoxine/pyridoxamine 5'-phosphate oxidase, found in Rhodopseudomonas palustris (strain BisA53).